The primary structure comprises 357 residues: Neuronal-specific septin-3 (357 aa).

Over residues 1 to 10 the composition is skewed to basic and acidic residues; that stretch reads MSKGLPETRT. The interval 1-29 is disordered; it reads MSKGLPETRTDAAMSELVPEPRPKPAVPM. The Septin-type G domain maps to 58-330; the sequence is TGFDFNIMVV…ETYRAKRLND (273 aa). A G1 motif region spans residues 68–75; sequence GQSGLGKS. 68-75 serves as a coordination point for GTP; that stretch reads GQSGLGKS. A Phosphoserine modification is found at serine 91. Threonine 102 is a GTP binding site. The tract at residues 125–128 is G3 motif; that stretch reads DTPG. Residues 207–210 are G4 motif; that stretch reads AKAD. GTP is bound by residues 208-216, glycine 264, and arginine 279; that span reads KADTMTLEE.

The protein belongs to the TRAFAC class TrmE-Era-EngA-EngB-Septin-like GTPase superfamily. Septin GTPase family. As to quaternary structure, septins polymerize into heterooligomeric protein complexes that form filaments, and can associate with cellular membranes, actin filaments and microtubules. GTPase activity is required for filament formation. Post-translationally, phosphorylated by PKG on serine residues. Phosphorylated by PKG on Ser-91.

Its subcellular location is the cytoplasm. The protein resides in the cytoskeleton. The protein localises to the synapse. Its function is as follows. Filament-forming cytoskeletal GTPase. May play a role in cytokinesis (Potential). The chain is Neuronal-specific septin-3 from Bos taurus (Bovine).